Here is a 178-residue protein sequence, read N- to C-terminus: ATP-dependent protease subunit HslV (178 aa).

Threonine 7 is an active-site residue. Na(+)-binding residues include glycine 162, cysteine 165, and threonine 168.

It belongs to the peptidase T1B family. HslV subfamily. A double ring-shaped homohexamer of HslV is capped on each side by a ring-shaped HslU homohexamer. The assembly of the HslU/HslV complex is dependent on binding of ATP.

It localises to the cytoplasm. The catalysed reaction is ATP-dependent cleavage of peptide bonds with broad specificity.. With respect to regulation, allosterically activated by HslU binding. Its function is as follows. Protease subunit of a proteasome-like degradation complex believed to be a general protein degrading machinery. This chain is ATP-dependent protease subunit HslV, found in Burkholderia orbicola (strain AU 1054).